The chain runs to 497 residues: MVSLLHKFLENASGKKGQDLASTAYLAALDHLLHSFPSIGKSIIDELKSQRSRLKMIASENYASISVQLAMGNLLTDKYCEGSPFKRFYSCCENVDAIEWECVETAKELFGAESAFVQPHSGADANLLAIMAIITQKIQGPAVKRLGYKTINDLTDKEYTELKAEIGSHVCLGPSLNSGGHLTHGTVRLNIMSKLMRCVPYEVNKKTECFDYSEIARLVRTYKPTVLIAGYSSYSRRLNFSTLKQIADDCGAVLWVDMAHFAGLVAGGVFIEEENPIPFADIITTTTHKTLRGPRGGLVLASKEYDAVINRACPLMMGGPLPHVIAAKAVALKEALTVDFKKYAHQVVDNARTLAEHFQKQGLRLLTGGTDNHMLIIDLTSLGISGRIAEDILSSVGIAVNRNTIPSDAVGKWDTSGIRLGTPALTTLGMGSDEMEEVANIIVKVLRNITLRRNADDSFSKSEGELPENIAEEARARVAGLLSRFPLYPEIDLETLV.

(6S)-5,6,7,8-tetrahydrofolate contacts are provided by residues L176 and 180–182 (GHL). K289 bears the N6-(pyridoxal phosphate)lysine mark.

This sequence belongs to the SHMT family. Homodimer. Requires pyridoxal 5'-phosphate as cofactor.

It is found in the cytoplasm. The enzyme catalyses (6R)-5,10-methylene-5,6,7,8-tetrahydrofolate + glycine + H2O = (6S)-5,6,7,8-tetrahydrofolate + L-serine. Its pathway is one-carbon metabolism; tetrahydrofolate interconversion. The protein operates within amino-acid biosynthesis; glycine biosynthesis; glycine from L-serine: step 1/1. In terms of biological role, catalyzes the reversible interconversion of serine and glycine with tetrahydrofolate (THF) serving as the one-carbon carrier. This reaction serves as the major source of one-carbon groups required for the biosynthesis of purines, thymidylate, methionine, and other important biomolecules. Also exhibits THF-independent aldolase activity toward beta-hydroxyamino acids, producing glycine and aldehydes, via a retro-aldol mechanism. This is Serine hydroxymethyltransferase from Chlamydia abortus (strain DSM 27085 / S26/3) (Chlamydophila abortus).